Consider the following 1038-residue polypeptide: Isoleucine--tRNA ligase (1038 aa).

The 'HIGH' region motif lies at 48–58 (PTANGKPHVGH). The 'KMSKS' region motif lies at 590–594 (KMSKS). Lys593 lines the ATP pocket.

It belongs to the class-I aminoacyl-tRNA synthetase family. IleS type 2 subfamily. In terms of assembly, monomer. Requires Zn(2+) as cofactor.

It is found in the cytoplasm. The catalysed reaction is tRNA(Ile) + L-isoleucine + ATP = L-isoleucyl-tRNA(Ile) + AMP + diphosphate. Its function is as follows. Catalyzes the attachment of isoleucine to tRNA(Ile). As IleRS can inadvertently accommodate and process structurally similar amino acids such as valine, to avoid such errors it has two additional distinct tRNA(Ile)-dependent editing activities. One activity is designated as 'pretransfer' editing and involves the hydrolysis of activated Val-AMP. The other activity is designated 'posttransfer' editing and involves deacylation of mischarged Val-tRNA(Ile). In Clostridium novyi (strain NT), this protein is Isoleucine--tRNA ligase.